We begin with the raw amino-acid sequence, 563 residues long: Quinidine resistance protein 1 (563 aa).

The segment covering 1 to 10 has biased composition (polar residues); the sequence is MTKQQTSVMR. A disordered region spans residues 1-50; the sequence is MTKQQTSVMRNASIAKEEREGSDNNNVDRSSSDAISDNDAERSNSHSEID. The Cytoplasmic segment spans residues 1 to 75; sequence MTKQQTSVMR…KQKMLLVVQC (75 aa). Low complexity predominate over residues 23-33; it reads DNNNVDRSSSD. Positions 39–49 are enriched in basic and acidic residues; it reads DAERSNSHSEI. A helical transmembrane segment spans residues 76–96; it reads AFTGFFSTVAGSIYYPVLTII. Residues 97-108 are Extracellular-facing; it reads ERKFNITEELAN. A helical membrane pass occupies residues 109–129; it reads VTIVVYFIFQGVAPSIMGGLA. Residues 130–135 are Cytoplasmic-facing; the sequence is DTFGRR. The helical transmembrane segment at 136–156 threads the bilayer; the sequence is PIVLWAILAYFCACIGLACAH. At 157-165 the chain is on the extracellular side; sequence NYAQILALR. Residues 166 to 186 traverse the membrane as a helical segment; that stretch reads CLQAAGISPVIAINSGIMGDV. The Cytoplasmic segment spans residues 187–195; the sequence is TTKVERGGY. Residues 196 to 216 traverse the membrane as a helical segment; the sequence is VGLVAGFQVVGTAFGALIGAG. The Extracellular portion of the chain corresponds to 217–224; sequence LSSKWGWR. A helical transmembrane segment spans residues 225–245; that stretch reads AIFWFLAIGSGICLVFSTLLM. The Cytoplasmic segment spans residues 246–296; it reads PETKRTLVGNGSVTPRSFLNRSLILHVGSVKKTLHLDDPDPETLEPRTSVD. A helical transmembrane segment spans residues 297 to 317; that stretch reads FLAPLKILHIREIDILLSIAG. Residues 318–341 lie on the Extracellular side of the membrane; sequence LQFSTWTTHQTALTIVLSKKYNLS. The chain crosses the membrane as a helical span at residues 342–362; sequence VAKIGLCFLPAGISTLTSIIS. Residues 363-421 lie on the Cytoplasmic side of the membrane; that stretch reads AGRYLNWSYRTRKVKYNRWIKEQELQLMEKYKGDKNKVAELIHSNSHYAFNLVEARLHP. The chain crosses the membrane as a helical span at residues 422-442; the sequence is AFVTLLLSSIGFTAFGWCISV. Residues 443–445 are Extracellular-facing; that stretch reads KTP. Residues 446–466 traverse the membrane as a helical segment; it reads LAAVLCTSAFASLFSNCILTF. Over 467–481 the chain is Cytoplasmic; sequence STTLIVDLFPSKAST. A helical transmembrane segment spans residues 482-502; that stretch reads ATGCLNLFRCLLSAIFIAALT. Residues 503–511 lie on the Extracellular side of the membrane; sequence KMVEKMRYG. The chain crosses the membrane as a helical span at residues 512–532; it reads GVFTFLSAITSSSSLLLFYLL. Residues 533 to 563 are Cytoplasmic-facing; that stretch reads KNGKQLSFDRIRANDKSAGRSVGKNSEKVST.

Belongs to the major facilitator superfamily. CAR1 family.

Its subcellular location is the cell membrane. Its function is as follows. Multidrug resistance transporter involved in resistance and adaptation to quinidine and ketoconazole. This Saccharomyces cerevisiae (strain ATCC 204508 / S288c) (Baker's yeast) protein is Quinidine resistance protein 1 (QDR1).